The following is a 119-amino-acid chain: U-scoloptoxin(01)-Cw1a (119 aa).

Residues 1–22 (MSKATNFYLFVLLGVFVALVRT) form the signal peptide. The 59-residue stretch at 38 to 96 (SFSCDGKKPGYYADQQMECQVYHVCTPDNEHAVLLCGPGTIFNQKHLVCDFPSNYACAD) folds into the Chitin-binding type-2 domain. A disulfide bridge connects residues Cys73 and Cys86.

The protein belongs to the scoloptoxin-01 family. In terms of processing, contains 3 disulfide bonds. Expressed by the venom gland.

Its subcellular location is the secreted. This chain is U-scoloptoxin(01)-Cw1a, found in Cormocephalus westwoodi (Westwood's green centipede).